The chain runs to 394 residues: Phosphoglycerate kinase (394 aa).

Substrate is bound by residues 21-23, Arg-36, 59-62, Arg-118, and Arg-151; these read DFN and HLGR. Ser-183 is modified (phosphoserine). Lys-201 contributes to the ATP binding site. The residue at position 299 (Thr-299) is a Phosphothreonine. Residues Asn-316, Glu-323, and 350-353 each bind ATP; that span reads GGDS.

This sequence belongs to the phosphoglycerate kinase family. Monomer.

It is found in the cytoplasm. It catalyses the reaction (2R)-3-phosphoglycerate + ATP = (2R)-3-phospho-glyceroyl phosphate + ADP. Its pathway is carbohydrate degradation; glycolysis; pyruvate from D-glyceraldehyde 3-phosphate: step 2/5. The chain is Phosphoglycerate kinase from Geobacillus stearothermophilus (Bacillus stearothermophilus).